A 485-amino-acid polypeptide reads, in one-letter code: MVDENLYRIKKYSDDTAFSCISKHFITLKDEEIKANNQHLHNVVSQGLIPLMKEDTLFKDIYRNIKYEGSYFKGTKVAKPDEYDLNLSMKLPLNYNELQVETNHKHFSYVKIKVNSESKLPKWEEHSKILNKWLSDKNYLNQNKFHQWMEAIMTNTYKKLKKSDNFYELEVDGKNYRIKQFKKSGPAFTIFVELGDHPTLMSMDIVPCLELNDIILQGYKTFPDVSPSKCVVAKPISKEPEGEFLWRLSFYEQEKQILSNSEVSKLKVVVKMIKKLRDQLNYKPLASYYIETIFLHEIAKRKSDVDFFRASKTSLFIYMLQKLIQALEKKCIPYFWHEGHNLIGHLQPPVIENYANRLKNILLSIDKKIVDDRFAMAEFLLNEEEKKNLLEIVESSKTNGSDTQNLEKSEVIKKIKHVINDGKNKENQNSFATIVTHAIIDRKENDLERRIAFVCEELKNLGQMKEQIPLADLNKLSESFKIMFS.

Residues S70 and 82–84 (EYD) contribute to the ATP site. Residues E82, D84, and D204 each contribute to the Mg(2+) site. GTP is bound by residues D204 and 247–254 (RLSFYEQE). Positions 271 and 274 each coordinate ATP. I298 and D304 together coordinate Mn(2+).

The protein belongs to the mab-21 family. Mg(2+) serves as cofactor. It depends on Mn(2+) as a cofactor.

The enzyme catalyses GTP + ATP = 2',3'-cGAMP + 2 diphosphate. The catalysed reaction is GTP + ATP = pppGp(2'-5')A + diphosphate. It carries out the reaction pppGp(2'-5')A = 2',3'-cGAMP + diphosphate. Its function is as follows. Nucleotidyltransferase that catalyzes the formation of cyclic GMP-AMP (2',3'-cGAMP) from ATP and GTP and plays a key role in innate immunity. Directly binds some unknown ligand, activating the nucleotidyltransferase activity, leading to synthesis of 2',3'-cGAMP, a second messenger that binds to and activates Sting, thereby triggering the immune response via activation of the NF-kappa-B transcription factor. The protein is Cyclic GMP-AMP synthase-like receptor of Trichogramma pretiosum (Parasitoid wasp).